The chain runs to 182 residues: Large ribosomal subunit protein uL5 (182 aa).

This sequence belongs to the universal ribosomal protein uL5 family. As to quaternary structure, part of the 50S ribosomal subunit; part of the 5S rRNA/L5/L18/L25 subcomplex. Contacts the 5S rRNA and the P site tRNA. Forms a bridge to the 30S subunit in the 70S ribosome.

This is one of the proteins that bind and probably mediate the attachment of the 5S RNA into the large ribosomal subunit, where it forms part of the central protuberance. In the 70S ribosome it contacts protein S13 of the 30S subunit (bridge B1b), connecting the 2 subunits; this bridge is implicated in subunit movement. Contacts the P site tRNA; the 5S rRNA and some of its associated proteins might help stabilize positioning of ribosome-bound tRNAs. The sequence is that of Large ribosomal subunit protein uL5 from Borrelia turicatae (strain 91E135).